The sequence spans 722 residues: Glycine--tRNA ligase beta subunit (722 aa).

It belongs to the class-II aminoacyl-tRNA synthetase family. As to quaternary structure, tetramer of two alpha and two beta subunits.

The protein resides in the cytoplasm. The catalysed reaction is tRNA(Gly) + glycine + ATP = glycyl-tRNA(Gly) + AMP + diphosphate. The sequence is that of Glycine--tRNA ligase beta subunit (glyS) from Xylella fastidiosa (strain 9a5c).